Here is a 367-residue protein sequence, read N- to C-terminus: Aspartate beta-hydroxylase domain-containing protein 1 (367 aa).

The tract at residues 1–27 (MWRGSSAGGSQGAAMEGTGGELGGQGN) is disordered. The Cytoplasmic portion of the chain corresponds to 1–49 (MWRGSSAGGSQGAAMEGTGGELGGQGNWGLEDAPGLLARASLPIMPAWP). A helical membrane pass occupies residues 50–72 (LPLASSALTLLLGALTSLFLWYC). At 73–367 (YRLGSQDMQA…ALDFVFAPDP (295 aa)) the chain is on the lumenal side. The interval 88–122 (RAGAVGGRPGGCSEAGRPSPGRSGESGEGPRTEGL) is disordered. Position 106 is a phosphoserine (S106).

This sequence belongs to the aspartyl/asparaginyl beta-hydroxylase family.

It is found in the membrane. The sequence is that of Aspartate beta-hydroxylase domain-containing protein 1 (ASPHD1) from Bos taurus (Bovine).